The primary structure comprises 255 residues: 5-oxoprolinase subunit A (255 aa).

This sequence belongs to the LamB/PxpA family. Forms a complex composed of PxpA, PxpB and PxpC.

The catalysed reaction is 5-oxo-L-proline + ATP + 2 H2O = L-glutamate + ADP + phosphate + H(+). Catalyzes the cleavage of 5-oxoproline to form L-glutamate coupled to the hydrolysis of ATP to ADP and inorganic phosphate. The protein is 5-oxoprolinase subunit A of Rhodopseudomonas palustris (strain BisA53).